A 346-amino-acid polypeptide reads, in one-letter code: Iron uptake protein A2 (346 aa).

The segment at residues 1-31 (MTTKISRRTFFVGGTALTALVVANLPRRASA) is a signal peptide (tat-type signal). Fe cation contacts are provided by His43, Tyr44, Tyr169, Tyr225, and Tyr226.

This sequence belongs to the bacterial solute-binding protein 1 family. Predicted to be exported by the Tat system. The position of the signal peptide cleavage has not been experimentally proven.

It is found in the cellular thylakoid membrane. It localises to the periplasm. In terms of biological role, probably part of a periplasmic ABC transporter complex futA1A2BC (TC 3.A.1.10.2) involved in Fe(3+) ion import (ferric iron). This protein and futA1 (slr1295) are subunit proteins that have redundant or overlapping substrate-binding functions. The differing subcellular locations of futA1 (predominantly thylakoid lumen) and futA2 (predominantly periplasmic) suggest they may fulfill different roles. Its function is as follows. Plays an important role in protecting the acceptor side of photosystem II (PSII) against oxidative damage, especially under iron-limiting growth conditions. Plays an undefined role in copper supply to thylakoid proteins. This Synechocystis sp. (strain ATCC 27184 / PCC 6803 / Kazusa) protein is Iron uptake protein A2 (futA2).